The following is a 229-amino-acid chain: E3 ubiquitin-protein ligase RNF114 (229 aa).

The disordered stretch occupies residues 1–23; it reads MAAAQPESRDGAAQSAKPASETD. Residues 30–69 form an RING-type zinc finger; that stretch reads CPVCLEVFEKPVQVPCGHVFCSACLQECLKPKKPVCGVCR. C92 and C95 together coordinate Zn(2+). A C2HC RNF-type zinc finger spans residues 92 to 111; the sequence is CHGCRKNFILSKIRAHVTSC. K103 bears the N6-acetyllysine mark. Residues H107 and C111 each contribute to the Zn(2+) site. At K113 the chain carries N6-acetyllysine.

As to quaternary structure, interacts with XAF1, the interaction increases XAF1 stability and proapoptotic effects, and may regulate IFN signaling. Autoubiquitinated. Polyubiquitinated in the presence of E2 enzymes UBE2D1, UBE2D2 and UBE2D3, but only monoubiquitinated in the presence of UBE2E1.

It is found in the cytoplasm. The protein resides in the nucleus. The catalysed reaction is S-ubiquitinyl-[E2 ubiquitin-conjugating enzyme]-L-cysteine + [acceptor protein]-L-lysine = [E2 ubiquitin-conjugating enzyme]-L-cysteine + N(6)-ubiquitinyl-[acceptor protein]-L-lysine.. It participates in protein modification; protein ubiquitination. Its function is as follows. E3 ubiquitin-protein ligase that promotes the ubiquitination of various substrates. In turn, participates in the regulation of many biological processes including cell cycle, apoptosis, osteoclastogenesis as well as innate or adaptive immunity. Acts as negative regulator of NF-kappa-B-dependent transcription by promoting the ubiquitination and stabilization of the NF-kappa-B inhibitor TNFAIP3. May promote the ubiquitination of TRAF6 as well. Also acts as a negative regulator of T-cell activation. Inhibits cellular dsRNA responses and interferon production by targeting MAVS component for proteasomal degradation. Ubiquitinates the CDK inhibitor CDKN1A leading to its degradationand probably also CDKN1B and CDKN1C. This activity stimulates cell cycle G1-to-S phase transition and suppresses cellular senescence. May play a role in spermatogenesis. The sequence is that of E3 ubiquitin-protein ligase RNF114 (Rnf114) from Mus musculus (Mouse).